A 119-amino-acid chain; its full sequence is Small polypeptide DEVIL 24 (119 aa).

The required for DVL/RTFL small polypeptide activity stretch occupies residues 83–114 (SFTSKCTSLMKQQHARLCIIRLCATMLLRSYT). Residues 96–113 (HARLCIIRLCATMLLRSY) form a helical membrane-spanning segment.

It belongs to the DVL/RTFL small polypeptides family.

The protein resides in the cell membrane. Its function is as follows. Small polypeptide acting as a regulatory molecule which coordinates cellular responses required for differentiation, growth and development, probably by restricting polar cell proliferation in lateral organs and coordinating socket cell recruitment and differentiation at trichome sites. This chain is Small polypeptide DEVIL 24, found in Arabidopsis thaliana (Mouse-ear cress).